We begin with the raw amino-acid sequence, 154 residues long: Ribonuclease HI (154 aa).

The RNase H type-1 domain maps to 1-142; it reads MTKHVEIFTD…CDELARTAAE (142 aa). Positions 10, 48, 70, and 134 each coordinate Mg(2+).

The protein belongs to the RNase H family. In terms of assembly, monomer. It depends on Mg(2+) as a cofactor.

It localises to the cytoplasm. It catalyses the reaction Endonucleolytic cleavage to 5'-phosphomonoester.. Functionally, endonuclease that specifically degrades the RNA of RNA-DNA hybrids. This Vibrio parahaemolyticus serotype O3:K6 (strain RIMD 2210633) protein is Ribonuclease HI.